We begin with the raw amino-acid sequence, 277 residues long: uncharacterized protein (277 aa).

This is an uncharacterized protein from Methanocaldococcus jannaschii (strain ATCC 43067 / DSM 2661 / JAL-1 / JCM 10045 / NBRC 100440) (Methanococcus jannaschii).